A 472-amino-acid chain; its full sequence is Ribulose bisphosphate carboxylase large chain (472 aa).

Substrate contacts are provided by Asn-115 and Thr-165. Residue Lys-167 is the Proton acceptor of the active site. Residue Lys-169 coordinates substrate. The Mg(2+) site is built by Lys-193, Asp-195, and Glu-196. Residue Lys-193 is modified to N6-carboxylysine. His-286 functions as the Proton acceptor in the catalytic mechanism. Residues Arg-287, His-319, and Ser-371 each contribute to the substrate site.

It belongs to the RuBisCO large chain family. Type I subfamily. Heterohexadecamer of 8 large chains and 8 small chains. It depends on Mg(2+) as a cofactor.

It catalyses the reaction 2 (2R)-3-phosphoglycerate + 2 H(+) = D-ribulose 1,5-bisphosphate + CO2 + H2O. It carries out the reaction D-ribulose 1,5-bisphosphate + O2 = 2-phosphoglycolate + (2R)-3-phosphoglycerate + 2 H(+). Its function is as follows. RuBisCO catalyzes two reactions: the carboxylation of D-ribulose 1,5-bisphosphate, the primary event in carbon dioxide fixation, as well as the oxidative fragmentation of the pentose substrate. Both reactions occur simultaneously and in competition at the same active site. The chain is Ribulose bisphosphate carboxylase large chain from Solemya velum gill symbiont.